We begin with the raw amino-acid sequence, 154 residues long: SsrA-binding protein (154 aa).

The protein belongs to the SmpB family.

The protein resides in the cytoplasm. Its function is as follows. Required for rescue of stalled ribosomes mediated by trans-translation. Binds to transfer-messenger RNA (tmRNA), required for stable association of tmRNA with ribosomes. tmRNA and SmpB together mimic tRNA shape, replacing the anticodon stem-loop with SmpB. tmRNA is encoded by the ssrA gene; the 2 termini fold to resemble tRNA(Ala) and it encodes a 'tag peptide', a short internal open reading frame. During trans-translation Ala-aminoacylated tmRNA acts like a tRNA, entering the A-site of stalled ribosomes, displacing the stalled mRNA. The ribosome then switches to translate the ORF on the tmRNA; the nascent peptide is terminated with the 'tag peptide' encoded by the tmRNA and targeted for degradation. The ribosome is freed to recommence translation, which seems to be the essential function of trans-translation. This is SsrA-binding protein from Staphylococcus saprophyticus subsp. saprophyticus (strain ATCC 15305 / DSM 20229 / NCIMB 8711 / NCTC 7292 / S-41).